The sequence spans 434 residues: Solute carrier RCH1 (434 aa).

The Cytoplasmic segment spans residues 1-15 (MKTQYSLIRKIWAHS). A helical membrane pass occupies residues 16–36 (VTEFLKSQWFFICLAILIVIA). Over 37–50 (RFAPNFARDGGLIK) the chain is Extracellular. The chain crosses the membrane as a helical span at residues 51–71 (GQYSIGYGCVAWIFLQSGLGM). At 72–87 (KSRSLMANMLNWRAHA) the chain is on the cytoplasmic side. A helical membrane pass occupies residues 88-108 (TILVLSFLITSSIVYGFCCAV). Over 109-118 (KAANDPKIDD) the chain is Extracellular. Residues 119 to 139 (WVLIGLILTATCPTTVASNVI) form a helical membrane-spanning segment. The Cytoplasmic segment spans residues 140–149 (MTTNAGGNSL). The chain crosses the membrane as a helical span at residues 150 to 170 (LCVCEVFIGNLLGAFITPALV). The Extracellular segment spans residues 171 to 199 (QMFTNRAPFAYGNPATGNGIGALYGRVMK). Residues 200–220 (QVGLSVFVPLFVGQVIQNCFP) traverse the membrane as a helical segment. Residues 221–234 (KGTAYYLGFLKKYH) are Cytoplasmic-facing. Residues 235 to 255 (IKIGSYMLLLIMFSSFSTAFY) form a helical membrane-spanning segment. The Extracellular segment spans residues 256-264 (QDAFTSVSH). Residues 265 to 285 (VCIIFLCFFNLGIYIFFTGLS) form a helical membrane-spanning segment. Topologically, residues 286 to 327 (YLCARPWFILKLFPHEPIEGKSTRLYRYSYNIFRPFYYSKED) are cytoplasmic. The chain crosses the membrane as a helical span at residues 328 to 348 (AICIMFCGPAKTAALGVSLIT). The Extracellular segment spans residues 349 to 362 (SQYGDKKEHLGKLL). The chain crosses the membrane as a helical span at residues 363–383 (VPLVLYQVEQVMTANFFVSLF). The Cytoplasmic segment spans residues 384 to 434 (KRWIQKDAQADGSESSCANENEEVDLEKIISIGTGENQSVLSNNVPYTQPR). Phosphoserine is present on Ser425.

The protein belongs to the bile acid:sodium symporter (BASS) (TC 2.A.28) family.

It localises to the cell membrane. Its subcellular location is the bud neck. Its function is as follows. Solute carrier protein that negatively regulates the cytosolic calcium homeostasis in response to high levels of extracellular calcium. In Saccharomyces cerevisiae (strain ATCC 204508 / S288c) (Baker's yeast), this protein is Solute carrier RCH1.